We begin with the raw amino-acid sequence, 214 residues long: Large ribosomal subunit protein uL16-like (214 aa).

This sequence belongs to the universal ribosomal protein uL16 family. As to quaternary structure, component of a male germ cell-specific 60S large ribosomal subunit (LSU), which contains RPL10L and RPL39L, instead of RPL10 and RPL39 paralogs. The composition of the rest of the complex is similar to classical ribosomes. Testis-specific.

It localises to the cytoplasm. Testis-specific component of the ribosome, which is required for the transition from prophase to metaphase in male meiosis I. Compensates for the inactivated X-linked RPL10 paralog during spermatogenesis. The ribosome is a large ribonucleoprotein complex responsible for the synthesis of proteins in the cell. The male germ cell-specific ribosome displays a ribosomal polypeptide exit tunnel of distinct size and charge states compared with the classical ribosome. It is responsible for regulating the biosynthesis and folding of a subset of male germ-cell-specific proteins that are essential for the formation of sperm. The protein is Large ribosomal subunit protein uL16-like of Mus musculus (Mouse).